The following is a 113-amino-acid chain: T cell receptor alpha variable 8-3 (113 aa).

The first 20 residues, 1-20 (MLLELIPLLGIHFVLRTARA), serve as a signal peptide directing secretion. The Ig-like domain maps to 21–113 (QSVTQPDIHI…DAAEYFCAVG (93 aa)). Cys42 and Cys110 form a disulfide bridge. The N-linked (GlcNAc...) asparagine glycan is linked to Asn43.

In terms of assembly, alpha-beta TR is a heterodimer composed of an alpha and beta chain; disulfide-linked. The alpha-beta TR is associated with the transmembrane signaling CD3 coreceptor proteins to form the TR-CD3 (TcR or TCR). The assembly of alpha-beta TR heterodimers with CD3 occurs in the endoplasmic reticulum where a single alpha-beta TR heterodimer associates with one CD3D-CD3E heterodimer, one CD3G-CD3E heterodimer and one CD247 homodimer forming a stable octameric structure. CD3D-CD3E and CD3G-CD3E heterodimers preferentially associate with TR alpha and TR beta chains, respectively. The association of the CD247 homodimer is the last step of TcR assembly in the endoplasmic reticulum and is required for transport to the cell surface.

Its subcellular location is the cell membrane. Functionally, v region of the variable domain of T cell receptor (TR) alpha chain that participates in the antigen recognition. Alpha-beta T cell receptors are antigen specific receptors which are essential to the immune response and are present on the cell surface of T lymphocytes. Recognize peptide-major histocompatibility (MH) (pMH) complexes that are displayed by antigen presenting cells (APC), a prerequisite for efficient T cell adaptive immunity against pathogens. Binding of alpha-beta TR to pMH complex initiates TR-CD3 clustering on the cell surface and intracellular activation of LCK that phosphorylates the ITAM motifs of CD3G, CD3D, CD3E and CD247 enabling the recruitment of ZAP70. In turn ZAP70 phosphorylates LAT, which recruits numerous signaling molecules to form the LAT signalosome. The LAT signalosome propagates signal branching to three major signaling pathways, the calcium, the mitogen-activated protein kinase (MAPK) kinase and the nuclear factor NF-kappa-B (NF-kB) pathways, leading to the mobilization of transcription factors that are critical for gene expression and essential for T cell growth and differentiation. The T cell repertoire is generated in the thymus, by V-(D)-J rearrangement. This repertoire is then shaped by intrathymic selection events to generate a peripheral T cell pool of self-MH restricted, non-autoaggressive T cells. Post-thymic interaction of alpha-beta TR with the pMH complexes shapes TR structural and functional avidity. The chain is T cell receptor alpha variable 8-3 from Homo sapiens (Human).